A 434-amino-acid chain; its full sequence is Cullin-like protein 5 (434 aa).

The segment at 1–34 (MKRSISPDPFSSTKSPKLVHHSPDDGGAEGNPYR) is disordered.

This sequence belongs to the cullin family.

In Arabidopsis thaliana (Mouse-ear cress), this protein is Cullin-like protein 5.